The sequence spans 189 residues: GMP synthase [glutamine-hydrolyzing] subunit A (189 aa).

In terms of domain architecture, Glutamine amidotransferase type-1 spans 1 to 189 (MIVILNNGGQ…CKKCGFEFEE (189 aa)). The active-site Nucleophile is Cys76. Active-site residues include His163 and Glu165.

Heterodimer composed of a glutamine amidotransferase subunit (A) and a GMP-binding subunit (B).

It catalyses the reaction XMP + L-glutamine + ATP + H2O = GMP + L-glutamate + AMP + diphosphate + 2 H(+). It functions in the pathway purine metabolism; GMP biosynthesis; GMP from XMP (L-Gln route): step 1/1. Functionally, catalyzes the synthesis of GMP from XMP. In Methanococcus maripaludis (strain C5 / ATCC BAA-1333), this protein is GMP synthase [glutamine-hydrolyzing] subunit A.